A 404-amino-acid chain; its full sequence is Sorting nexin-5 (404 aa).

Alanine 2 bears the N-acetylalanine mark. The 148-residue stretch at 25–172 folds into the PX domain; that stretch reads LNVDPSLQID…HVFLEYDQDL (148 aa). A 1,2-diacyl-sn-glycero-3-phospho-(1D-myo-inositol-4,5-bisphosphate) is bound by residues 40–46, 99–105, and 113–116; these read SERDKVK, FDGPREK, and EGSM. The tract at residues 169–261 is interaction with DOCK1; it reads DQDLSVRRKN…HSLALEEPTV (93 aa). Residues 183–200 form a membrane-binding amphipathic helix region; that stretch reads FGGFFKSVVKSADEVLFS. Serine 193 carries the post-translational modification Phosphoserine. Positions 202–404 constitute a BAR domain; that stretch reads VKEVDDFFEQ…QSCIDLFKNN (203 aa). An N6-acetyllysine modification is found at lysine 275.

The protein belongs to the sorting nexin family. In terms of assembly, forms heterodimers with BAR domain-containing sorting nexins SNX1 and SNX2; does not homodimerize. The heterodimers are proposed to self-assemble into helical arrays on the membrane to stabilize and expand local membrane curvature underlying endosomal tubule formation. Thought to be a component of the originally described retromer complex (also called SNX-BAR retromer) which is a pentamer containing the heterotrimeric retromer cargo-selective complex (CSC), also described as vacuolar protein sorting subcomplex (VPS), and a heterodimeric membrane-deforming subcomplex formed between SNX1 or SNX2 and SNX5 or SNX6 (also called SNX-BAR subcomplex); the respective CSC and SNX-BAR subcomplexes associate with low affinity. Interacts with SNX1, SNX2, VPS26A, VPS29, VPS35, DCTN1, DOCK1, MIB1, PIP5K1C. Interacts with HGS; increased by PIP5K1C kinase activity and by PtdIns(3P) and/or PtdIns(3,4)P2.

The protein localises to the endosome. The protein resides in the early endosome. It is found in the early endosome membrane. It localises to the cell membrane. Its subcellular location is the cytoplasmic vesicle membrane. The protein localises to the cytoplasm. The protein resides in the cell projection. It is found in the phagocytic cup. It localises to the ruffle. Involved in several stages of intracellular trafficking. Interacts with membranes containing phosphatidylinositol lipids. Acts in part as component of the retromer membrane-deforming SNX-BAR subcomplex. The SNX-BAR retromer mediates retrograde transport of cargo proteins from endosomes to the trans-Golgi network (TGN) and is involved in endosome-to-plasma membrane transport for cargo protein recycling. The SNX-BAR subcomplex functions to deform the donor membrane into a tubular profile called endosome-to-TGN transport carrier (ETC). Does not have in vitro vesicle-to-membrane remodeling activity. Involved in retrograde transport of lysosomal enzyme receptor IGF2R. May function as link between endosomal transport vesicles and dynactin. Plays a role in the internalization of EGFR after EGF stimulation. Involved in EGFR endosomal sorting and degradation; the function involves PIP5K1C and is retromer-independent. Together with PIP5K1C facilitates HGS interaction with ubiquitinated EGFR, which initiates EGFR sorting to intraluminal vesicles (ILVs) of the multivesicular body for subsequent lysosomal degradation. Involved in E-cadherin sorting and degradation; inhibits PIP5K1C-mediated E-cadherin degradation. Plays a role in macropinocytosis. This Bos taurus (Bovine) protein is Sorting nexin-5 (SNX5).